We begin with the raw amino-acid sequence, 177 residues long: Large ribosomal subunit protein uL6 (177 aa).

The protein belongs to the universal ribosomal protein uL6 family. In terms of assembly, part of the 50S ribosomal subunit.

This protein binds to the 23S rRNA, and is important in its secondary structure. It is located near the subunit interface in the base of the L7/L12 stalk, and near the tRNA binding site of the peptidyltransferase center. The protein is Large ribosomal subunit protein uL6 of Acinetobacter baumannii (strain SDF).